The following is a 179-amino-acid chain: Large ribosomal subunit protein uL5 (179 aa).

This sequence belongs to the universal ribosomal protein uL5 family. As to quaternary structure, part of the 50S ribosomal subunit; part of the 5S rRNA/L5/L18/L25 subcomplex. Contacts the 5S rRNA and the P site tRNA. Forms a bridge to the 30S subunit in the 70S ribosome.

Its function is as follows. This is one of the proteins that bind and probably mediate the attachment of the 5S RNA into the large ribosomal subunit, where it forms part of the central protuberance. In the 70S ribosome it contacts protein S13 of the 30S subunit (bridge B1b), connecting the 2 subunits; this bridge is implicated in subunit movement. Contacts the P site tRNA; the 5S rRNA and some of its associated proteins might help stabilize positioning of ribosome-bound tRNAs. In Pseudomonas fluorescens (strain SBW25), this protein is Large ribosomal subunit protein uL5.